Reading from the N-terminus, the 431-residue chain is Enolase (431 aa).

Q167 lines the (2R)-2-phosphoglycerate pocket. The Proton donor role is filled by E209. Residues D246, E290, and D317 each coordinate Mg(2+). The (2R)-2-phosphoglycerate site is built by K342, R371, S372, and K393. Catalysis depends on K342, which acts as the Proton acceptor.

The protein belongs to the enolase family. As to quaternary structure, component of the RNA degradosome, a multiprotein complex involved in RNA processing and mRNA degradation. The cofactor is Mg(2+).

The protein localises to the cytoplasm. The protein resides in the secreted. Its subcellular location is the cell surface. It catalyses the reaction (2R)-2-phosphoglycerate = phosphoenolpyruvate + H2O. The protein operates within carbohydrate degradation; glycolysis; pyruvate from D-glyceraldehyde 3-phosphate: step 4/5. Functionally, catalyzes the reversible conversion of 2-phosphoglycerate (2-PG) into phosphoenolpyruvate (PEP). It is essential for the degradation of carbohydrates via glycolysis. This chain is Enolase, found in Serratia proteamaculans (strain 568).